The sequence spans 81 residues: Adipogenin (81 aa).

The helical transmembrane segment at Phe-16 to Leu-36 threads the bilayer.

The protein belongs to the adipogenin family. As to expression, highly expressed in subcutaneous, perirenal and mesecentric adipose tissue.

Its subcellular location is the membrane. It is found in the nucleus. Functionally, plays a role in stimulating adipocyte differentiation and development. This Bos taurus (Bovine) protein is Adipogenin.